The chain runs to 498 residues: 3-octaprenyl-4-hydroxybenzoate carboxy-lyase (498 aa).

N175 lines the Mn(2+) pocket. Prenylated FMN contacts are provided by residues 178–180, 192–194, and 197–198; these read IYR, RWL, and RG. E241 serves as a coordination point for Mn(2+). D290 serves as the catalytic Proton donor.

The protein belongs to the UbiD family. As to quaternary structure, homohexamer. Requires prenylated FMN as cofactor. Mn(2+) is required as a cofactor.

Its subcellular location is the cell membrane. It carries out the reaction a 4-hydroxy-3-(all-trans-polyprenyl)benzoate + H(+) = a 2-(all-trans-polyprenyl)phenol + CO2. It participates in cofactor biosynthesis; ubiquinone biosynthesis. In terms of biological role, catalyzes the decarboxylation of 3-octaprenyl-4-hydroxy benzoate to 2-octaprenylphenol, an intermediate step in ubiquinone biosynthesis. This Pectobacterium atrosepticum (strain SCRI 1043 / ATCC BAA-672) (Erwinia carotovora subsp. atroseptica) protein is 3-octaprenyl-4-hydroxybenzoate carboxy-lyase.